A 711-amino-acid chain; its full sequence is Putative membrane protein IgaA homolog (711 aa).

Position 1 (Met-1) is a topological domain, periplasmic. Residues 2 to 22 traverse the membrane as a helical segment; it reads STIVIFLAALLACSLLAGWLI. The Cytoplasmic segment spans residues 23-204; it reads KVRSRRRQLP…YALSRPRGLR (182 aa). 2 helical membrane-spanning segments follow: residues 205–225 and 226–246; these read EALL…TPDV and FVPW…WGLF. Residues 247 to 339 are Cytoplasmic-facing; it reads APPAKSSLRE…KNFPLQHWLR (93 aa). A helical membrane pass occupies residues 340 to 360; sequence STIIAAGSLLVLFMLLFWIPL. Over 361-655 the chain is Periplasmic; it reads DMPLKFTLSW…IPDRSGLWRY (295 aa). Residues 656–676 form a helical membrane-spanning segment; sequence LSTTLLLLTMLGSAIYNGVQA. The Cytoplasmic segment spans residues 677–711; sequence WRRYQRHRTRMMKIQAYYESCLNPQLITPSESLIE.

The protein belongs to the IgaA family.

It is found in the cell inner membrane. This is Putative membrane protein IgaA homolog (yrfF) from Escherichia coli O157:H7.